Here is a 348-residue protein sequence, read N- to C-terminus: Dihydroorotase (348 aa).

Zn(2+) is bound by residues H14 and H16. Substrate is bound by residues 16–18 (HLR) and N42. Zn(2+)-binding residues include K100, H137, and H175. An N6-carboxylysine modification is found at K100. H137 is a substrate binding site. Residue L220 coordinates substrate. Residue D248 participates in Zn(2+) binding. Residue D248 is part of the active site. Residues H252 and A264 each contribute to the substrate site.

It belongs to the metallo-dependent hydrolases superfamily. DHOase family. Class II DHOase subfamily. Homodimer. Requires Zn(2+) as cofactor.

It carries out the reaction (S)-dihydroorotate + H2O = N-carbamoyl-L-aspartate + H(+). It participates in pyrimidine metabolism; UMP biosynthesis via de novo pathway; (S)-dihydroorotate from bicarbonate: step 3/3. Its function is as follows. Catalyzes the reversible cyclization of carbamoyl aspartate to dihydroorotate. In Pseudomonas fluorescens (strain Pf0-1), this protein is Dihydroorotase.